A 119-amino-acid chain; its full sequence is Basic phospholipase A2 taipoxin alpha chain (119 aa).

Disulfide bonds link Cys-11–Cys-72, Cys-27–Cys-118, Cys-29–Cys-45, Cys-44–Cys-99, Cys-51–Cys-92, Cys-61–Cys-85, and Cys-79–Cys-90. Residues Tyr-28, Gly-30, and Gly-32 each coordinate Ca(2+). His-48 is a catalytic residue. Asp-49 is a binding site for Ca(2+). Residue Asp-93 is part of the active site.

It belongs to the phospholipase A2 family. Group I subfamily. D49 sub-subfamily. Heterotrimer of alpha, beta, and gamma chains; non-covalently linked. Requires Ca(2+) as cofactor. As to expression, expressed by the venom gland.

It localises to the secreted. It catalyses the reaction a 1,2-diacyl-sn-glycero-3-phosphocholine + H2O = a 1-acyl-sn-glycero-3-phosphocholine + a fatty acid + H(+). Functionally, heterotrimer: Snake venom phospholipase A2 (PLA2) heterotrimer that acts as a potent presynaptic neurotoxin by blocking synaptic transmission and synaptic vesicle recycling. May act by binding in a calcium-dependent fashion to neurotonal pentraxin-1 (NPTX1) and neurotonal pentraxin-2 (NPTX2), but not to neuronal pentraxin receptor (NPTXR). Also binds to taipoxin-associated calcium binding protein 49 (RCN2), a protein localized in the lumen of endoplasmic reticulum. Monomer (alpha chain): Snake venom phospholipase A2 (PLA2) alpha chain that possesses the same high enzymatic activity as the heterotrimer. PLA2 catalyzes the calcium-dependent hydrolysis of the 2-acyl groups in 3-sn-phosphoglycerides. This chain is Basic phospholipase A2 taipoxin alpha chain, found in Oxyuranus scutellatus scutellatus (Australian taipan).